Here is a 310-residue protein sequence, read N- to C-terminus: Inorganic pyrophosphatase, mitochondrial (310 aa).

The N-terminal 30 residues, 1 to 30 (MNLLRMNALTSKARSIERLKQTLNILSIRN), are a transit peptide targeting the mitochondrion. Residues Asp152, Asp157, and Asp189 each contribute to the Mg(2+) site.

Belongs to the PPase family. Homodimer that binds non-covalently to a protein complex in the inner mitochondrial membrane. It depends on Mg(2+) as a cofactor.

The protein resides in the mitochondrion. The enzyme catalyses diphosphate + H2O = 2 phosphate + H(+). In terms of biological role, involved in energy production. Its activity is stimulated by uncouplers of ATP synthesis. In Saccharomyces cerevisiae (strain ATCC 204508 / S288c) (Baker's yeast), this protein is Inorganic pyrophosphatase, mitochondrial (PPA2).